The sequence spans 282 residues: Bifunctional protein FolD (282 aa).

Residues 164 to 166, isoleucine 189, and isoleucine 230 contribute to the NADP(+) site; that span reads GAS.

The protein belongs to the tetrahydrofolate dehydrogenase/cyclohydrolase family. In terms of assembly, homodimer.

The enzyme catalyses (6R)-5,10-methylene-5,6,7,8-tetrahydrofolate + NADP(+) = (6R)-5,10-methenyltetrahydrofolate + NADPH. It carries out the reaction (6R)-5,10-methenyltetrahydrofolate + H2O = (6R)-10-formyltetrahydrofolate + H(+). Its pathway is one-carbon metabolism; tetrahydrofolate interconversion. Functionally, catalyzes the oxidation of 5,10-methylenetetrahydrofolate to 5,10-methenyltetrahydrofolate and then the hydrolysis of 5,10-methenyltetrahydrofolate to 10-formyltetrahydrofolate. This is Bifunctional protein FolD from Campylobacter jejuni subsp. doylei (strain ATCC BAA-1458 / RM4099 / 269.97).